We begin with the raw amino-acid sequence, 452 residues long: GTPase Der (452 aa).

EngA-type G domains follow at residues 4-169 and 177-352; these read PIVA…PPPE and IKVA…EEHR. GTP-binding positions include 10-17, 57-61, 120-123, 183-190, 230-234, and 295-298; these read GRPNVGKS, DTGGL, NKCE, DTAGI, and NKWD. One can recognise a KH-like domain in the interval 353–438; it reads RRVTTAVINE…PIRLLWRGKK (86 aa).

It belongs to the TRAFAC class TrmE-Era-EngA-EngB-Septin-like GTPase superfamily. EngA (Der) GTPase family. In terms of assembly, associates with the 50S ribosomal subunit.

Its function is as follows. GTPase that plays an essential role in the late steps of ribosome biogenesis. The polypeptide is GTPase Der (Rippkaea orientalis (strain PCC 8801 / RF-1) (Cyanothece sp. (strain PCC 8801))).